The sequence spans 79 residues: UPF0291 protein BH2353 (79 aa).

The interval 57–79 (GAGNDVTPDKLKQSKNKYRNDIH) is disordered. The span at 63-79 (TPDKLKQSKNKYRNDIH) shows a compositional bias: basic and acidic residues.

This sequence belongs to the UPF0291 family.

The protein localises to the cytoplasm. The sequence is that of UPF0291 protein BH2353 from Halalkalibacterium halodurans (strain ATCC BAA-125 / DSM 18197 / FERM 7344 / JCM 9153 / C-125) (Bacillus halodurans).